The primary structure comprises 428 residues: 3-phosphoshikimate 1-carboxyvinyltransferase (428 aa).

Positions 23, 24, and 28 each coordinate 3-phosphoshikimate. Position 23 (Lys-23) interacts with phosphoenolpyruvate. Residues Gly-97 and Arg-125 each contribute to the phosphoenolpyruvate site. Residues Ser-170, Ser-171, Gln-172, Ser-198, Asp-314, Asn-337, and Lys-341 each coordinate 3-phosphoshikimate. Phosphoenolpyruvate is bound at residue Gln-172. Residue Asp-314 is the Proton acceptor of the active site. 3 residues coordinate phosphoenolpyruvate: Arg-345, Arg-387, and Lys-412.

Belongs to the EPSP synthase family. As to quaternary structure, monomer.

The protein resides in the cytoplasm. It catalyses the reaction 3-phosphoshikimate + phosphoenolpyruvate = 5-O-(1-carboxyvinyl)-3-phosphoshikimate + phosphate. It participates in metabolic intermediate biosynthesis; chorismate biosynthesis; chorismate from D-erythrose 4-phosphate and phosphoenolpyruvate: step 6/7. Catalyzes the transfer of the enolpyruvyl moiety of phosphoenolpyruvate (PEP) to the 5-hydroxyl of shikimate-3-phosphate (S3P) to produce enolpyruvyl shikimate-3-phosphate and inorganic phosphate. In Buchnera aphidicola subsp. Schizaphis graminum (strain Sg), this protein is 3-phosphoshikimate 1-carboxyvinyltransferase.